The sequence spans 339 residues: Anthranilate phosphoribosyltransferase (339 aa).

Residues Gly-81, Gly-84–Asp-85, Thr-89, Asn-91–Thr-94, Lys-109–Ser-117, and Thr-121 contribute to the 5-phospho-alpha-D-ribose 1-diphosphate site. Residue Gly-81 coordinates anthranilate. Ser-93 is a binding site for Mg(2+). Residue Asn-112 participates in anthranilate binding. Arg-167 provides a ligand contact to anthranilate. Residues Asp-226 and Glu-227 each contribute to the Mg(2+) site.

This sequence belongs to the anthranilate phosphoribosyltransferase family. As to quaternary structure, homodimer. Requires Mg(2+) as cofactor.

The catalysed reaction is N-(5-phospho-beta-D-ribosyl)anthranilate + diphosphate = 5-phospho-alpha-D-ribose 1-diphosphate + anthranilate. It functions in the pathway amino-acid biosynthesis; L-tryptophan biosynthesis; L-tryptophan from chorismate: step 2/5. Its function is as follows. Catalyzes the transfer of the phosphoribosyl group of 5-phosphorylribose-1-pyrophosphate (PRPP) to anthranilate to yield N-(5'-phosphoribosyl)-anthranilate (PRA). In Ruegeria pomeroyi (strain ATCC 700808 / DSM 15171 / DSS-3) (Silicibacter pomeroyi), this protein is Anthranilate phosphoribosyltransferase.